The chain runs to 175 residues: Lipoprotein signal peptidase (175 aa).

4 consecutive transmembrane segments (helical) span residues 25-45, 56-76, 81-101, and 110-130; these read LWMA…IVIV, VTGF…SFLA, WQRW…VWLL, and FCFA…DRVV. Active-site residues include D136 and D154. Residues 146 to 166 form a helical membrane-spanning segment; that stretch reads HWPAFNVADCAITVGAVLLIV.

Belongs to the peptidase A8 family.

It is found in the cell inner membrane. It carries out the reaction Release of signal peptides from bacterial membrane prolipoproteins. Hydrolyzes -Xaa-Yaa-Zaa-|-(S,diacylglyceryl)Cys-, in which Xaa is hydrophobic (preferably Leu), and Yaa (Ala or Ser) and Zaa (Gly or Ala) have small, neutral side chains.. Its pathway is protein modification; lipoprotein biosynthesis (signal peptide cleavage). Its function is as follows. This protein specifically catalyzes the removal of signal peptides from prolipoproteins. This chain is Lipoprotein signal peptidase, found in Cupriavidus necator (strain ATCC 17699 / DSM 428 / KCTC 22496 / NCIMB 10442 / H16 / Stanier 337) (Ralstonia eutropha).